The sequence spans 307 residues: Ribonuclease H2 subunit B (307 aa).

Ala-2 bears the N-acetylalanine mark. Position 291 is an N6-acetyllysine (Lys-291). Ser-292 bears the Phosphoserine mark.

It belongs to the RNase H2 subunit B family. The RNase H2 complex is a heterotrimer composed of the catalytic subunit RNASEH2A and the non-catalytic subunits RNASEH2B and RNASEH2C.

The protein localises to the nucleus. Non catalytic subunit of RNase H2, an endonuclease that specifically degrades the RNA of RNA:DNA hybrids. Participates in DNA replication, possibly by mediating the removal of lagging-strand Okazaki fragment RNA primers during DNA replication. Mediates the excision of single ribonucleotides from DNA:RNA duplexes. The sequence is that of Ribonuclease H2 subunit B (Rnaseh2b) from Rattus norvegicus (Rat).